A 301-amino-acid polypeptide reads, in one-letter code: E3 ubiquitin-protein ligase DIS1 (301 aa).

The RING-type; degenerate zinc finger occupies 53 to 89 (CPVCLSAMYPPIHQCSNGHTLCSGCKPRVHNRCPTCR). The segment at 106–166 (SLELPCKYQN…LVNHLKDDHK (61 aa)) adopts an SIAH-type; degenerate zinc-finger fold.

The protein belongs to the SINA (Seven in absentia) family. As to quaternary structure, homodimer. Interacts with NEK6. Interacts with SKIPA.

The protein resides in the nucleus. It localises to the cytoplasm. The catalysed reaction is S-ubiquitinyl-[E2 ubiquitin-conjugating enzyme]-L-cysteine + [acceptor protein]-L-lysine = [E2 ubiquitin-conjugating enzyme]-L-cysteine + N(6)-ubiquitinyl-[acceptor protein]-L-lysine.. It functions in the pathway protein modification; protein ubiquitination. E3 ubiquitin-protein ligase that mediates ubiquitination and subsequent proteasomal degradation of target proteins. E3 ubiquitin ligases accept ubiquitin from an E2 ubiquitin-conjugating enzyme in the form of a thioester and then directly transfers the ubiquitin to targeted substrates. Plays a negative role in drought stress tolerance through transcriptional and post-translational regulation of diverse stress-related genes. Interacts with the serine/threonine-protein kinase NEK6 and promotes its degradation via the 26S proteasome-dependent pathway. The protein is E3 ubiquitin-protein ligase DIS1 of Oryza sativa subsp. japonica (Rice).